The following is an 803-amino-acid chain: Volume-regulated anion channel subunit LRRC8C (803 aa).

Residues 1–22 are Cytoplasmic-facing; it reads MIPVTEFRQFSEQQPAFRVLKP. The chain crosses the membrane as a helical span at residues 23 to 48; that stretch reads WWDVFTDYLSVAMLMIGVFGCTLQVM. Residues 49–124 are Extracellular-facing; the sequence is QDKIICLPKR…CYERALHWYA (76 aa). 2 disulfides stabilise this stretch: C54–C308 and C115–C293. Residues 125 to 144 form a helical membrane-spanning segment; it reads KYFPYLVLIHTLVFMLCSNF. At 145-262 the chain is on the cytoplasmic side; the sequence is WFKFPGSSSK…EEGDILYAMY (118 aa). The disordered stretch occupies residues 177–206; the sequence is EVSGEDSEEKDNRKNNMNRSGTIQSGPEGN. Residues 191–206 are compositionally biased toward polar residues; that stretch reads NNMNRSGTIQSGPEGN. A phosphoserine mark is found at S212 and S215. Residues 263–284 form a helical membrane-spanning segment; it reads VRQTVLKVIKFLIIIAYNSALV. The Extracellular portion of the chain corresponds to 285-314; it reads SKVQFTVDCNVDIQDMTGYKNFSCNHTMAH. Residues 315-339 form a helical membrane-spanning segment; it reads LFSKLSFCYLCFVSIYGLTCLYTLY. Residues 340-803 lie on the Cytoplasmic side of the membrane; that stretch reads WLFYRSLREY…SDVREQMKAD (464 aa). LRR repeat units lie at residues 409-420, 421-443, 446-466, 467-488, 490-513, 515-537, 541-563, 566-586, 588-611, 613-635, 637-659, 660-682, 684-705, 706-728, 730-751, 752-774, and 776-799; these read WTPDKLRQKLQT, NAHN…VFEI, LQSL…IAQL, DNLQ…ALSF, KENL…MYGL, NLEE…TLES, LKSL…VVDV, HLQK…NNLK, MTNL…VFSL, SLQE…SFQH, RKLT…IKKL, TSLE…LFLC, KIRY…IGVL, QSLQ…LYFC, KLKT…IGNL, LFLS…LGDC, and ALKR…VREQ.

It belongs to the LRRC8 family. As to quaternary structure, heterohexamer; oligomerizes with other LRRC8 proteins (LRRC8A, LRRC8B, LRRC8D and/or LRRC8E) to form a heterohexamer. Homoheptamer; inactive, likely because it is not targeted to the plasma membrane in the absence of LRRC8A. In vivo, the subunit composition may depend primarily on expression levels, and heterooligomeric channels containing various proportions of the different LRRC8 proteins may coexist. As to expression, expressed at very low levels in adipose tissue.

The protein resides in the cell membrane. The protein localises to the endoplasmic reticulum membrane. The catalysed reaction is chloride(in) = chloride(out). It carries out the reaction iodide(out) = iodide(in). The enzyme catalyses taurine(out) = taurine(in). It catalyses the reaction 2',3'-cGAMP(out) = 2',3'-cGAMP(in). Its function is as follows. Non-essential component of the volume-regulated anion channel (VRAC, also named VSOAC channel), an anion channel required to maintain a constant cell volume in response to extracellular or intracellular osmotic changes. The VRAC channel conducts iodide better than chloride and can also conduct organic osmolytes like taurine. Plays a redundant role in the efflux of amino acids, such as aspartate and glutamate, in response to osmotic stress. The VRAC channel also mediates transport of immunoreactive cyclic dinucleotide GMP-AMP (2'-3'-cGAMP), an immune messenger produced in response to DNA virus in the cytosol. Channel activity requires LRRC8A plus at least one other family member (LRRC8B, LRRC8C, LRRC8D or LRRC8E); channel characteristics depend on the precise subunit composition. May play a role in adipogenesis. The protein is Volume-regulated anion channel subunit LRRC8C of Mus musculus (Mouse).